A 732-amino-acid polypeptide reads, in one-letter code: Coagulation factor XIII A chain (732 aa).

The tract at residues methionine 1–aspartate 26 is disordered. N-acetylserine is present on serine 2. Positions serine 2–arginine 38 are cleaved as a propeptide — activation peptide. Residues cysteine 315, histidine 374, and aspartate 397 contribute to the active site. Residues asparagine 437, aspartate 439, glutamate 486, and glutamate 491 each coordinate Ca(2+). A glycan (N-linked (GlcNAc...) asparagine) is linked at asparagine 614.

This sequence belongs to the transglutaminase superfamily. Transglutaminase family. As to quaternary structure, tetramer of two A chains (F13A1) and two B (F13B) chains. The cofactor is Ca(2+). The activation peptide is released by thrombin.

It localises to the cytoplasm. The protein resides in the secreted. The enzyme catalyses L-glutaminyl-[protein] + L-lysyl-[protein] = [protein]-L-lysyl-N(6)-5-L-glutamyl-[protein] + NH4(+). Factor XIII is activated by thrombin and calcium ion to a transglutaminase that catalyzes the formation of gamma-glutamyl-epsilon-lysine cross-links between fibrin chains, thus stabilizing the fibrin clot. Also cross-link alpha-2-plasmin inhibitor, or fibronectin, to the alpha chains of fibrin. This chain is Coagulation factor XIII A chain (F13a1), found in Mus musculus (Mouse).